The primary structure comprises 556 residues: Oxygen-dependent choline dehydrogenase (556 aa).

An FAD-binding site is contributed by 6-35 (DYIIIGAGSAGNVLAARLTEDPGVTVLLLE). Histidine 475 acts as the Proton acceptor in catalysis.

It belongs to the GMC oxidoreductase family. FAD serves as cofactor.

It catalyses the reaction choline + A = betaine aldehyde + AH2. It carries out the reaction betaine aldehyde + NAD(+) + H2O = glycine betaine + NADH + 2 H(+). Its pathway is amine and polyamine biosynthesis; betaine biosynthesis via choline pathway; betaine aldehyde from choline (cytochrome c reductase route): step 1/1. Its function is as follows. Involved in the biosynthesis of the osmoprotectant glycine betaine. Catalyzes the oxidation of choline to betaine aldehyde and betaine aldehyde to glycine betaine at the same rate. The protein is Oxygen-dependent choline dehydrogenase of Xanthomonas euvesicatoria pv. vesicatoria (strain 85-10) (Xanthomonas campestris pv. vesicatoria).